The primary structure comprises 295 residues: MMRIVLFLLTNLAVMLVFGIILSLTGIQGSSVQGLMIMAGLFGFGGAFVSLLMSKWMALRSVGGQVIEQPANEVEHWLVETVRSQAEQVNIAMPQVAIYAAPDINAFATGARRNASLVAVSSGLLDNMSRAEAEAVIAHEISHIANGDMVTMTLLQGIVNTFVIFISRLLAQAVSSFLSGNSDEEESNSSGNPIVYMVASMVLEIVFGILASIITMWFSRYREFHADAGSAKLVGREKMIAALQRLKTSYEPQEEGGMMAFCINGKSKTFSELFMSHPPLDKRIEALRSGQYLNK.

2 helical membrane-spanning segments follow: residues 4-24 (IVLF…ILSL) and 34-54 (GLMI…LLMS). Residue His-139 coordinates Zn(2+). Glu-140 is an active-site residue. A Zn(2+)-binding site is contributed by His-143. Transmembrane regions (helical) follow at residues 147-167 (GDMV…IFIS) and 194-214 (IVYM…ASII). Position 223 (Glu-223) interacts with Zn(2+).

Belongs to the peptidase M48B family. Zn(2+) serves as cofactor.

The protein localises to the cell inner membrane. The sequence is that of Protease HtpX from Photorhabdus laumondii subsp. laumondii (strain DSM 15139 / CIP 105565 / TT01) (Photorhabdus luminescens subsp. laumondii).